Here is a 253-residue protein sequence, read N- to C-terminus: Small ribosomal subunit protein uS2 (253 aa).

Positions 226-253 (QGADNADVEKELSESVEENSAEEVDDAE) are disordered. Over residues 239–253 (ESVEENSAEEVDDAE) the composition is skewed to acidic residues.

This sequence belongs to the universal ribosomal protein uS2 family.

In Lactobacillus delbrueckii subsp. bulgaricus (strain ATCC 11842 / DSM 20081 / BCRC 10696 / JCM 1002 / NBRC 13953 / NCIMB 11778 / NCTC 12712 / WDCM 00102 / Lb 14), this protein is Small ribosomal subunit protein uS2.